The primary structure comprises 588 residues: A-type ATP synthase subunit A (588 aa).

Residue 237 to 244 (GPFGSGKT) participates in ATP binding.

Belongs to the ATPase alpha/beta chains family. In terms of assembly, has multiple subunits with at least A(3), B(3), C, D, E, F, H, I and proteolipid K(x).

It is found in the cell membrane. It catalyses the reaction ATP + H2O + 4 H(+)(in) = ADP + phosphate + 5 H(+)(out). In terms of biological role, component of the A-type ATP synthase that produces ATP from ADP in the presence of a proton gradient across the membrane. The A chain is the catalytic subunit. This is A-type ATP synthase subunit A from Methanoregula boonei (strain DSM 21154 / JCM 14090 / 6A8).